The following is a 192-amino-acid chain: UPF0149 protein YE3397 (192 aa).

Belongs to the UPF0149 family.

This chain is UPF0149 protein YE3397, found in Yersinia enterocolitica serotype O:8 / biotype 1B (strain NCTC 13174 / 8081).